The sequence spans 2546 residues: Formin-J (2546 aa).

Disordered stretches follow at residues 1 to 40 (MEENTNNIDNGHMGDNNNENNNNSNNNNNNNSNSSSSFVK), 61 to 108 (ENSN…PLSE), 188 to 270 (KNIT…PNSA), 369 to 414 (TTNN…SSSS), 502 to 541 (TNSFGSSTTTTISGGGSGSSSVNSSGGGSGTTPINVTPNS), 802 to 849 (SSIS…NTRK), 879 to 898 (TSVPTSPTSKNPLITSNNNN), 987 to 1101 (TTNN…GGIG), 1485 to 1529 (PKSK…ASLS), 1558 to 1601 (KRSK…FKSP), 1659 to 1775 (INNI…KVNS), 1840 to 1869 (VPTTTTSTTTTTQTTPPPVTINEKEKETQS), and 2014 to 2033 (SNLSRKSSKSSNNSSTSSLE). Composition is skewed to low complexity over residues 16 to 37 (NNNENNNNSNNNNNNNSNSSSS) and 62 to 98 (NSNNSITSGGSSSNSGEISSNNNNNNNNNGILKNSTS). Composition is skewed to polar residues over residues 99–108 (GSKDNTPLSE) and 188–198 (KNITPSKNNSP). Composition is skewed to low complexity over residues 203–237 (NNNNNNNNNNNNNNNNNNNNNNNNNNNNNNNNNNN) and 247–270 (NKNSIYNTNSNNNSNTTNSTPNSA). Residues 377 to 389 (AESLTTYSESSEI) are compositionally biased toward polar residues. 2 stretches are compositionally biased toward low complexity: residues 390 to 414 (STDSTGVCSSSSSTSSTLSSKSSSS) and 502 to 513 (TNSFGSSTTTTI). Positions 391 to 444 (TDSTGVCSSSSSTSSTLSSKSSSSSSFNKFMEFLLIYIEDNDSTNGTWVNGNKL) constitute an FHA domain. Residues 457–963 (KITLSTPDFS…SSISNEQEYQ (507 aa)) enclose the GBD/FH3 domain. Polar residues-rich tracts occupy residues 879-891 (TSVPTSPTSKNPL) and 992-1007 (SSAKNIEVDSSVNKSP). Pro residues predominate over residues 1033 to 1042 (VPPPPPPPPG). Low complexity predominate over residues 1043-1056 (GNNNNESDVPSSSG). A compositionally biased stretch (pro residues) spans 1057-1097 (GPPPPPPPPPPPGKSSGGGPPPPPPPPPKGGKGGPPPPPPI). Residues 1072–1098 (SGGGPPPPPPPPPKGGKGGPPPPPPIG) form the FH1 domain. The FH2 domain occupies 1106-1495 (KVKEEQPSVP…KSKKYQEQQN (390 aa)). Residues 1492–1502 (EQQNKPTQNND) show a composition bias toward polar residues. Residues 1507–1529 (SKLSNLPSSSSINDESSSSASLS) are compositionally biased toward low complexity. The 31-residue stretch at 1563 to 1593 (EQEPVVEPIQITPKVGSAASAEPSPSIKSRD) folds into the DAD domain. Over residues 1665–1679 (SSSSSSSSSSSSSSS) the composition is skewed to low complexity. Basic and acidic residues predominate over residues 1687–1717 (HNTESEIKKEFISNSSMDKDKEKIKEKEKGT). A compositionally biased stretch (low complexity) spans 1732–1745 (KSTTTSPSSSSSKK). The segment covering 1746 to 1757 (QIPSLSECLQES) has biased composition (polar residues). Low complexity-rich tracts occupy residues 1763–1775 (RSSSYSPNSKVNS) and 1841–1853 (PTTTTSTTTTTQT). Residues 2067 to 2118 (IDDNQQKQQKQQQQQQQQQQQQQQLPQPQQQQQQQQQQQQQQQQQQQQQQQQ) are a coiled coil. The segment covering 2121–2154 (QQSTTTTTISTHHPQLKQVQPQSPSSLSQQPTQQ) has biased composition (low complexity). Disordered regions lie at residues 2121 to 2369 (QQST…PKTV), 2381 to 2473 (SHKK…SYSS), and 2485 to 2510 (SPSSSITSCKPSPGAVSSTSSTLKTP). Positions 2160-2179 (QPSSPLQSHYKPQQKPQTTY) are enriched in polar residues. Low complexity-rich tracts occupy residues 2188–2206 (ANPFPSSTTSTNSSPSNAS) and 2237–2256 (SSASSNSSSVSGSSQSTPLS). Polar residues predominate over residues 2274–2287 (TPPSSSISNSTATT). Over residues 2302–2315 (SPSSSSLEQSSNAS) the composition is skewed to low complexity. Residues 2332 to 2342 (FKKHKKSHSKS) show a composition bias toward basic residues. 3 stretches are compositionally biased toward low complexity: residues 2388 to 2439 (VDQS…SSSS), 2459 to 2473 (NISSGNISNNTSYSS), and 2485 to 2497 (SPSSSITSCKPSP). Positions 2499-2508 (AVSSTSSTLK) are enriched in polar residues.

Belongs to the formin homology family. Diaphanous subfamily. As to quaternary structure, interacts (via GBD/FH3 domain) with activated Rho-GTPases.

Its function is as follows. Formins play an important role in the nucleation of actin and the formation of linear actin filaments. In Dictyostelium discoideum (Social amoeba), this protein is Formin-J (forJ).